Here is an 88-residue protein sequence, read N- to C-terminus: Toxin RelE2 (88 aa).

It belongs to the RelE toxin family.

Toxic component of a type II toxin-antitoxin (TA) system. Its toxic effect is neutralized by coexpression with cognate antitoxin RelB2 but no other ParD or RelB antitoxin. This Caulobacter vibrioides (strain ATCC 19089 / CIP 103742 / CB 15) (Caulobacter crescentus) protein is Toxin RelE2 (relE2).